A 445-amino-acid polypeptide reads, in one-letter code: Probable D-serine dehydratase (445 aa).

The residue at position 111 (Lys-111) is an N6-(pyridoxal phosphate)lysine.

The protein belongs to the serine/threonine dehydratase family. DsdA subfamily. The cofactor is pyridoxal 5'-phosphate.

The enzyme catalyses D-serine = pyruvate + NH4(+). In Burkholderia pseudomallei (strain 1710b), this protein is Probable D-serine dehydratase.